The primary structure comprises 397 residues: Chorismate synthase (397 aa).

2 residues coordinate NADP(+): arginine 40 and arginine 46. Residues 129–131 (RSS), 257–258 (QA), glycine 302, 317–321 (KPISS), and arginine 343 contribute to the FMN site.

The protein belongs to the chorismate synthase family. Homotetramer. Requires FMNH2 as cofactor.

It carries out the reaction 5-O-(1-carboxyvinyl)-3-phosphoshikimate = chorismate + phosphate. The protein operates within metabolic intermediate biosynthesis; chorismate biosynthesis; chorismate from D-erythrose 4-phosphate and phosphoenolpyruvate: step 7/7. Functionally, catalyzes the anti-1,4-elimination of the C-3 phosphate and the C-6 proR hydrogen from 5-enolpyruvylshikimate-3-phosphate (EPSP) to yield chorismate, which is the branch point compound that serves as the starting substrate for the three terminal pathways of aromatic amino acid biosynthesis. This reaction introduces a second double bond into the aromatic ring system. This Chlorobium phaeobacteroides (strain DSM 266 / SMG 266 / 2430) protein is Chorismate synthase.